The primary structure comprises 119 residues: MARVKRGVTAHAKHKKVYKLAKGFRGRRKNTIRAAKAAVDKAGQYAFRDRKRKKRTFRALWIQRINAAVRPLGMTYSVFINGLAKSGVIVDRKVLSDLAITEPAAFQAIAEKAKAALAA.

This sequence belongs to the bacterial ribosomal protein bL20 family.

Its function is as follows. Binds directly to 23S ribosomal RNA and is necessary for the in vitro assembly process of the 50S ribosomal subunit. It is not involved in the protein synthesizing functions of that subunit. The protein is Large ribosomal subunit protein bL20 of Rhodopseudomonas palustris (strain BisB5).